The following is a 442-amino-acid chain: 5-methylthioadenosine/S-adenosylhomocysteine deaminase (442 aa).

The Zn(2+) site is built by histidine 72 and histidine 74. Substrate contacts are provided by glutamate 101 and histidine 194. Zn(2+) is bound at residue histidine 221. Positions 224 and 309 each coordinate substrate. Aspartate 309 is a Zn(2+) binding site.

It belongs to the metallo-dependent hydrolases superfamily. MTA/SAH deaminase family. The cofactor is Zn(2+).

It catalyses the reaction S-adenosyl-L-homocysteine + H2O + H(+) = S-inosyl-L-homocysteine + NH4(+). The catalysed reaction is S-methyl-5'-thioadenosine + H2O + H(+) = S-methyl-5'-thioinosine + NH4(+). Functionally, catalyzes the deamination of 5-methylthioadenosine and S-adenosyl-L-homocysteine into 5-methylthioinosine and S-inosyl-L-homocysteine, respectively. Is also able to deaminate adenosine. This is 5-methylthioadenosine/S-adenosylhomocysteine deaminase from Teredinibacter turnerae (strain ATCC 39867 / T7901).